The primary structure comprises 260 residues: Dehydrogenase/reductase SDR family member 11 (260 aa).

A signal peptide spans 1-30; it reads MARPGMERWRDRLALVTGASGGIGAAVARA. Residues 18-23, 43-44, E49, 70-71, and N97 contribute to the NADP(+) site; these read GASGGI, RT, and DL. Residues S151 and Y166 each coordinate substrate. NADP(+) is bound by residues Y166, K170, 201 to 204, and K208; that span reads VETQ. The active-site Proton acceptor is Y166.

It belongs to the short-chain dehydrogenases/reductases (SDR) family. As to quaternary structure, homotetramer. In terms of tissue distribution, isoform 1: Ubiquitously expressed, with highest levels in testis, small intestine, colon, kidney, brain and heart. Isoform 3: Expressed in brain, heart and skeletal muscle.

The protein localises to the secreted. The catalysed reaction is a 3beta-hydroxysteroid + NADP(+) = a 3-oxosteroid + NADPH + H(+). The enzyme catalyses 17beta-estradiol + NAD(+) = estrone + NADH + H(+). It catalyses the reaction 17beta-estradiol + NADP(+) = estrone + NADPH + H(+). It participates in steroid biosynthesis; estrogen biosynthesis. With respect to regulation, inhibited by flavonoids including apigenin, luteolin, genistein, kaempferol and quercetin and also by carbenoxolone, zearalenone, glycyrrhetinic, curcumin and flufenamic acid. Catalyzes the conversion of the 17-keto group of estrone, 4- and 5-androstenes and 5-alpha-androstanes into their 17-beta-hydroxyl metabolites and the conversion of the 3-keto group of 3-, 3,17- and 3,20- diketosteroids into their 3-hydroxyl metabolites. Exhibits reductive 3-beta-hydroxysteroid dehydrogenase activity toward 5-beta-androstanes, 5-beta-pregnanes, 4-pregnenes and bile acids. May also reduce endogenous and exogenous alpha-dicarbonyl compounds and xenobiotic alicyclic ketones. The sequence is that of Dehydrogenase/reductase SDR family member 11 (DHRS11) from Homo sapiens (Human).